Consider the following 316-residue polypeptide: Putative transketolase C-terminal section (316 aa).

Belongs to the transketolase family. Thiamine diphosphate serves as cofactor.

It catalyses the reaction D-sedoheptulose 7-phosphate + D-glyceraldehyde 3-phosphate = aldehydo-D-ribose 5-phosphate + D-xylulose 5-phosphate. The sequence is that of Putative transketolase C-terminal section from Methanocaldococcus jannaschii (strain ATCC 43067 / DSM 2661 / JAL-1 / JCM 10045 / NBRC 100440) (Methanococcus jannaschii).